Here is a 278-residue protein sequence, read N- to C-terminus: Diaminopimelate epimerase (278 aa).

Substrate-binding residues include N11 and N75. C84 (proton donor) is an active-site residue. Substrate contacts are provided by residues 85 to 86, N160, N195, and 213 to 214; these read GN and ER. The active-site Proton acceptor is C222. Residue 223–224 participates in substrate binding; sequence GT.

The protein belongs to the diaminopimelate epimerase family. Homodimer.

It localises to the cytoplasm. The catalysed reaction is (2S,6S)-2,6-diaminopimelate = meso-2,6-diaminopimelate. The protein operates within amino-acid biosynthesis; L-lysine biosynthesis via DAP pathway; DL-2,6-diaminopimelate from LL-2,6-diaminopimelate: step 1/1. In terms of biological role, catalyzes the stereoinversion of LL-2,6-diaminopimelate (L,L-DAP) to meso-diaminopimelate (meso-DAP), a precursor of L-lysine and an essential component of the bacterial peptidoglycan. In Corynebacterium aurimucosum (strain ATCC 700975 / DSM 44827 / CIP 107346 / CN-1) (Corynebacterium nigricans), this protein is Diaminopimelate epimerase.